The primary structure comprises 82 residues: Delta-actitoxin-Aeq2a (82 aa).

Residues 1 to 19 form the signal peptide; the sequence is MNRLMILVFAAVFLALASA. The propeptide occupies 20–26; that stretch reads DEDVDIA. Disulfide bonds link cysteine 32/cysteine 79, cysteine 34/cysteine 69, and cysteine 62/cysteine 80.

Belongs to the sea anemone sodium channel inhibitory toxin family. Type I subfamily.

Its subcellular location is the secreted. It localises to the nematocyst. Functionally, binds specifically to voltage-gated sodium channels (Nav), thereby delaying their inactivation during signal transduction. Causes death to crabs (minimum lethal dose of 25 ug/kg) and mice. The chain is Delta-actitoxin-Aeq2a from Actinia equina (Beadlet anemone).